Here is a 222-residue protein sequence, read N- to C-terminus: Ribosomal RNA small subunit methyltransferase G (222 aa).

S-adenosyl-L-methionine contacts are provided by residues Gly73, Leu78, 124-125 (AE), and Arg137.

It belongs to the methyltransferase superfamily. RNA methyltransferase RsmG family.

It is found in the cytoplasm. Specifically methylates the N7 position of guanine in position 518 of 16S rRNA. In Acidothermus cellulolyticus (strain ATCC 43068 / DSM 8971 / 11B), this protein is Ribosomal RNA small subunit methyltransferase G.